Consider the following 447-residue polypeptide: Argininosuccinate synthase (447 aa).

Residues 17-25 (AFSGGLDTS) and Ala-43 each bind ATP. Tyr-99 provides a ligand contact to L-citrulline. Positions 129 and 131 each coordinate ATP. The L-aspartate site is built by Thr-131, Asn-135, and Asp-136. Asn-135 is an L-citrulline binding site. Asp-136 provides a ligand contact to ATP. The L-citrulline site is built by Arg-139 and Ser-192. Asp-194 lines the ATP pocket. L-citrulline-binding residues include Thr-201, Glu-203, and Glu-280.

This sequence belongs to the argininosuccinate synthase family. Type 2 subfamily. As to quaternary structure, homotetramer.

It localises to the cytoplasm. It catalyses the reaction L-citrulline + L-aspartate + ATP = 2-(N(omega)-L-arginino)succinate + AMP + diphosphate + H(+). It participates in amino-acid biosynthesis; L-arginine biosynthesis; L-arginine from L-ornithine and carbamoyl phosphate: step 2/3. This Janthinobacterium sp. (strain Marseille) (Minibacterium massiliensis) protein is Argininosuccinate synthase.